The chain runs to 456 residues: tRNA-2-methylthio-N(6)-dimethylallyladenosine synthase (456 aa).

One can recognise an MTTase N-terminal domain in the interval 1–116 (MTYFFETYGC…FESIFQEIEQ (116 aa)). [4Fe-4S] cluster contacts are provided by Cys10, Cys46, Cys79, Cys162, Cys166, and Cys169. Residues 148–384 (SEGSFQSFIP…IALQMSTTLK (237 aa)) enclose the Radical SAM core domain. A TRAM domain is found at 387-452 (RARVGKTLPV…GRTLRAHLVQ (66 aa)).

It belongs to the methylthiotransferase family. MiaB subfamily. In terms of assembly, monomer. The cofactor is [4Fe-4S] cluster.

It is found in the cytoplasm. The catalysed reaction is N(6)-dimethylallyladenosine(37) in tRNA + (sulfur carrier)-SH + AH2 + 2 S-adenosyl-L-methionine = 2-methylsulfanyl-N(6)-dimethylallyladenosine(37) in tRNA + (sulfur carrier)-H + 5'-deoxyadenosine + L-methionine + A + S-adenosyl-L-homocysteine + 2 H(+). Catalyzes the methylthiolation of N6-(dimethylallyl)adenosine (i(6)A), leading to the formation of 2-methylthio-N6-(dimethylallyl)adenosine (ms(2)i(6)A) at position 37 in tRNAs that read codons beginning with uridine. The sequence is that of tRNA-2-methylthio-N(6)-dimethylallyladenosine synthase from Treponema pallidum (strain Nichols).